We begin with the raw amino-acid sequence, 177 residues long: Protein CutA 1, chloroplastic (177 aa).

The transit peptide at 1 to 60 directs the protein to the chloroplast; it reads MPLLPSPLGSLSAAATAAPRRAAAAAGLSPLLLRRRAPIAGALLFLSLGAFAGVRSLSSS.

This sequence belongs to the CutA family. In terms of assembly, homotrimer.

It is found in the plastid. Its subcellular location is the chloroplast. The protein is Protein CutA 1, chloroplastic (CUTA1) of Oryza sativa subsp. japonica (Rice).